A 503-amino-acid chain; its full sequence is SH2 domain-containing adapter protein B (503 aa).

2 disordered regions span residues 1-49 (MAKW…QACS) and 61-81 (CFSA…DLIR). Ser-101 bears the Phosphoserine mark. Residues 147-157 (AAASSSSSSGS) show a composition bias toward low complexity. Positions 147–180 (AAASSSSSSGSPHLYRSSSERRPTTPAEVRYISP) are disordered. Lys-186 is covalently cross-linked (Glycyl lysine isopeptide (Lys-Gly) (interchain with G-Cter in SUMO2)). Disordered stretches follow at residues 225–262 (ETGA…SAGY), 292–333 (DTPY…YDQP), and 345–381 (AAQF…IKHG). Basic and acidic residues predominate over residues 244-256 (FDAKSDLKSKAGK). Phosphoserine occurs at positions 301 and 311. Polar residues predominate over residues 301–311 (SVDSDSESTVS). Residues 313–328 (RLRESKLPQDDDRPAD) are compositionally biased toward basic and acidic residues. Ser-382 is subject to Phosphoserine. Positions 404 to 498 (WYHGAISRSD…AEHLSLLYPV (95 aa)) constitute an SH2 domain.

As to quaternary structure, interacts with phosphorylated 'Tyr-720' of the ligand-activated receptor PDGFRA via its SH2 domain. Interacts with the ligand-activated receptors PDGFRB, FGFR1, KDR/VEGFR2, IL2RB and IL2RG. Interacts with EPS8 and V-SRC. Interacts with GRB2 and GRAP. Interacts with CD3Z. Interacts with tyrosine-phosphorylated LAT upon T-cell antigen receptor activation. Interacts with PLCG1. Interacts with ZAP70, LCP2/SLP-76, VAV1 and GRAP2. Interacts with JAK1 and JAK3. Interacts with PTK2/FAK1. Interacts with CRK/CrKII. Interacts with IRS2. Interacts with PTPN11. Post-translationally, phosphorylated upon PDGFRA, PDGFRB, TCR, IL2 receptor, FGFR1 or VEGFR2 activation. As to expression, expressed in heart, liver, brain and kidney (at protein level).

The protein resides in the cytoplasm. It localises to the cell membrane. Adapter protein which regulates several signal transduction cascades by linking activated receptors to downstream signaling components. May play a role in angiogenesis by regulating FGFR1, VEGFR2 and PDGFR signaling. May also play a role in T-cell antigen receptor/TCR signaling, interleukin-2 signaling, apoptosis and neuronal cells differentiation by mediating basic-FGF and NGF-induced signaling cascades. May also regulate IRS1 and IRS2 signaling in insulin-producing cells. This is SH2 domain-containing adapter protein B (Shb) from Mus musculus (Mouse).